The chain runs to 88 residues: Exodeoxyribonuclease 7 small subunit (88 aa).

This sequence belongs to the XseB family. As to quaternary structure, heterooligomer composed of large and small subunits.

It is found in the cytoplasm. The enzyme catalyses Exonucleolytic cleavage in either 5'- to 3'- or 3'- to 5'-direction to yield nucleoside 5'-phosphates.. In terms of biological role, bidirectionally degrades single-stranded DNA into large acid-insoluble oligonucleotides, which are then degraded further into small acid-soluble oligonucleotides. In Bordetella petrii (strain ATCC BAA-461 / DSM 12804 / CCUG 43448), this protein is Exodeoxyribonuclease 7 small subunit.